Consider the following 273-residue polypeptide: Dermonecrotic toxin LamSicTox-alphaIC1 (273 aa).

Residue His5 is part of the active site. 2 residues coordinate Mg(2+): Glu25 and Asp27. The active-site Nucleophile is His41. 2 disulfide bridges follow: Cys45–Cys51 and Cys47–Cys190. Asp85 is a binding site for Mg(2+).

The protein belongs to the arthropod phospholipase D family. Class II subfamily. It depends on Mg(2+) as a cofactor. Expressed by the venom gland.

Its subcellular location is the secreted. It catalyses the reaction an N-(acyl)-sphingosylphosphocholine = an N-(acyl)-sphingosyl-1,3-cyclic phosphate + choline. The catalysed reaction is an N-(acyl)-sphingosylphosphoethanolamine = an N-(acyl)-sphingosyl-1,3-cyclic phosphate + ethanolamine. It carries out the reaction a 1-acyl-sn-glycero-3-phosphocholine = a 1-acyl-sn-glycero-2,3-cyclic phosphate + choline. The enzyme catalyses a 1-acyl-sn-glycero-3-phosphoethanolamine = a 1-acyl-sn-glycero-2,3-cyclic phosphate + ethanolamine. Functionally, dermonecrotic toxins cleave the phosphodiester linkage between the phosphate and headgroup of certain phospholipids (sphingolipid and lysolipid substrates), forming an alcohol (often choline) and a cyclic phosphate. This toxin acts on sphingomyelin (SM). It may also act on ceramide phosphoethanolamine (CPE), lysophosphatidylcholine (LPC) and lysophosphatidylethanolamine (LPE), but not on lysophosphatidylserine (LPS), and lysophosphatidylglycerol (LPG). It acts by transphosphatidylation, releasing exclusively cyclic phosphate products as second products. Induces dermonecrosis, hemolysis, increased vascular permeability, edema, inflammatory response, and platelet aggregation. This Loxosceles amazonica (Recluse spider) protein is Dermonecrotic toxin LamSicTox-alphaIC1.